The chain runs to 452 residues: tRNA modification GTPase MnmE (452 aa).

3 residues coordinate (6S)-5-formyl-5,6,7,8-tetrahydrofolate: Arg22, Glu79, and Lys119. A TrmE-type G domain is found at 215–375 (GMKVVIAGRP…LRQHLKQSMG (161 aa)). K(+) is bound at residue Asn225. GTP is bound by residues 225 to 230 (NAGKSS), 244 to 250 (TDIAGTT), 269 to 272 (DTAG), and 333 to 336 (NKAD). Ser229 is a binding site for Mg(2+). The K(+) site is built by Thr244, Ile246, and Thr249. Thr250 is a binding site for Mg(2+). Lys452 lines the (6S)-5-formyl-5,6,7,8-tetrahydrofolate pocket.

Belongs to the TRAFAC class TrmE-Era-EngA-EngB-Septin-like GTPase superfamily. TrmE GTPase family. As to quaternary structure, homodimer. Heterotetramer of two MnmE and two MnmG subunits. The cofactor is K(+).

The protein resides in the cytoplasm. Exhibits a very high intrinsic GTPase hydrolysis rate. Involved in the addition of a carboxymethylaminomethyl (cmnm) group at the wobble position (U34) of certain tRNAs, forming tRNA-cmnm(5)s(2)U34. The sequence is that of tRNA modification GTPase MnmE from Histophilus somni (strain 129Pt) (Haemophilus somnus).